Here is a 281-residue protein sequence, read N- to C-terminus: NADPH-dependent 7-cyano-7-deazaguanine reductase (281 aa).

Residue 88–90 participates in substrate binding; it reads VES. Residue 90-91 participates in NADPH binding; it reads SK. Cysteine 189 serves as the catalytic Thioimide intermediate. Aspartate 196 functions as the Proton donor in the catalytic mechanism. 228–229 is a substrate binding site; it reads HE. 257–258 lines the NADPH pocket; the sequence is RG.

The protein belongs to the GTP cyclohydrolase I family. QueF type 2 subfamily. In terms of assembly, homodimer.

It is found in the cytoplasm. It catalyses the reaction 7-aminomethyl-7-carbaguanine + 2 NADP(+) = 7-cyano-7-deazaguanine + 2 NADPH + 3 H(+). Its pathway is tRNA modification; tRNA-queuosine biosynthesis. In terms of biological role, catalyzes the NADPH-dependent reduction of 7-cyano-7-deazaguanine (preQ0) to 7-aminomethyl-7-deazaguanine (preQ1). In Klebsiella pneumoniae subsp. pneumoniae (strain ATCC 700721 / MGH 78578), this protein is NADPH-dependent 7-cyano-7-deazaguanine reductase.